The sequence spans 80 residues: Acyl carrier protein (80 aa).

In terms of domain architecture, Carrier spans 4 to 79; it reads NSIEEKVRSI…DVVAYIEKVQ (76 aa). Ser-39 is subject to O-(pantetheine 4'-phosphoryl)serine.

Belongs to the acyl carrier protein (ACP) family. Post-translationally, 4'-phosphopantetheine is transferred from CoA to a specific serine of apo-ACP by AcpS. This modification is essential for activity because fatty acids are bound in thioester linkage to the sulfhydryl of the prosthetic group.

It is found in the cytoplasm. It functions in the pathway lipid metabolism; fatty acid biosynthesis. Functionally, carrier of the growing fatty acid chain in fatty acid biosynthesis. This is Acyl carrier protein from Akkermansia muciniphila (strain ATCC BAA-835 / DSM 22959 / JCM 33894 / BCRC 81048 / CCUG 64013 / CIP 107961 / Muc).